Reading from the N-terminus, the 772-residue chain is Polyribonucleotide nucleotidyltransferase (772 aa).

2 residues coordinate Mg(2+): Asp-486 and Asp-492. A KH domain is found at 553–612 (PRIETLQIDKSKIRDVIGTGGKVIREIVATTGAKVDIDDEGLIKISSSDLTQIEAAKNWI). The S1 motif domain maps to 622–690 (GKIYKGKVVN…QRGKVRLSMR (69 aa)). The disordered stretch occupies residues 695 to 772 (ETGAELEDTR…HMPAFLKSDD (78 aa)). Over residues 701 to 760 (EDTRPPREPREPRGDRGDRGDRGDRRGPRGDRGPRREGGDRGPRREGGDRPRRDRDDGPA) the composition is skewed to basic and acidic residues.

It belongs to the polyribonucleotide nucleotidyltransferase family. Requires Mg(2+) as cofactor.

Its subcellular location is the cytoplasm. The enzyme catalyses RNA(n+1) + phosphate = RNA(n) + a ribonucleoside 5'-diphosphate. Involved in mRNA degradation. Catalyzes the phosphorolysis of single-stranded polyribonucleotides processively in the 3'- to 5'-direction. The polypeptide is Polyribonucleotide nucleotidyltransferase (Novosphingobium aromaticivorans (strain ATCC 700278 / DSM 12444 / CCUG 56034 / CIP 105152 / NBRC 16084 / F199)).